We begin with the raw amino-acid sequence, 558 residues long: MVYFKAGQPEHTPRTFPLQINRSFSDKHPKVAKALRITAIVLVSLSLIALVGCIAALSGGAVIPLAAIGGIAAVTGLLSSAIAIYSAKKALAHKKQKQLADSLPLDTGTEHVQYLTTNNFRGNNWDTLEKLVQQFSQLDLTVHPSEKELLKEVFGTEYKSINQTIESISNRFAKIRSLLYQREQLYKGEERYNRYLNTPLLRKNRILTQITSNMIRLLPRSGGVFSIKANTLSRTSHTLYTILKVSLSLGVIAAVASLVIFLPPSLPIIAALGLASLSLGIAAFLMARGIRYLLERSSINRKQLAEDIQKTIGPDVLNSMAYYQHQLLSHLHETLLDEAITTKWNQPIFLEHADLELKIGDLTKQYDILNSAFEQALRNDELLRAQLEKRAYRFGSSITDNDTDNDSGATESQQTDSENDGFQEILNKGIEAAKQRREKANQSGSNKEDMFSIWKPSKHLALEDLWRASEACTEEQLSILVDNCMSYKTLECQAALQKVRLQLQTAQRSLAALENRAENAYYESNLSMMDLARANQETYRLLNILSELQQLAQYVLDR.

The segment at 396-420 is disordered; the sequence is SSITDNDTDNDSGATESQQTDSEND. The span at 407 to 416 shows a compositional bias: polar residues; it reads SGATESQQTD.

This sequence belongs to the chlamydial CPn_0065/CT_288/TC_0561 family.

This is an uncharacterized protein from Chlamydia muridarum (strain MoPn / Nigg).